The chain runs to 459 residues: Bifunctional protein GlmU (459 aa).

The interval 1–229 is pyrophosphorylase; the sequence is MSNFAIILAA…FDESLGVNDR (229 aa). UDP-N-acetyl-alpha-D-glucosamine-binding positions include 8–11, lysine 22, glutamine 72, and 77–78; these read LAAG and GT. Mg(2+) is bound at residue aspartate 102. Residues glycine 139, glutamate 154, asparagine 169, and asparagine 227 each contribute to the UDP-N-acetyl-alpha-D-glucosamine site. Asparagine 227 is a binding site for Mg(2+). Positions 230–250 are linker; the sequence is VALATAESVMRRRINHKHMVN. Positions 251 to 459 are N-acetyltransferase; sequence GVSFVNPEAT…TRLPHHPKNQ (209 aa). Positions 332 and 350 each coordinate UDP-N-acetyl-alpha-D-glucosamine. Residue histidine 362 is the Proton acceptor of the active site. Tyrosine 365 and asparagine 376 together coordinate UDP-N-acetyl-alpha-D-glucosamine. Acetyl-CoA contacts are provided by residues alanine 379, 385-386, serine 404, alanine 422, and arginine 439; that span reads NY.

It in the N-terminal section; belongs to the N-acetylglucosamine-1-phosphate uridyltransferase family. This sequence in the C-terminal section; belongs to the transferase hexapeptide repeat family. In terms of assembly, homotrimer. Mg(2+) serves as cofactor.

It localises to the cytoplasm. It carries out the reaction alpha-D-glucosamine 1-phosphate + acetyl-CoA = N-acetyl-alpha-D-glucosamine 1-phosphate + CoA + H(+). The catalysed reaction is N-acetyl-alpha-D-glucosamine 1-phosphate + UTP + H(+) = UDP-N-acetyl-alpha-D-glucosamine + diphosphate. It participates in nucleotide-sugar biosynthesis; UDP-N-acetyl-alpha-D-glucosamine biosynthesis; N-acetyl-alpha-D-glucosamine 1-phosphate from alpha-D-glucosamine 6-phosphate (route II): step 2/2. It functions in the pathway nucleotide-sugar biosynthesis; UDP-N-acetyl-alpha-D-glucosamine biosynthesis; UDP-N-acetyl-alpha-D-glucosamine from N-acetyl-alpha-D-glucosamine 1-phosphate: step 1/1. Its pathway is bacterial outer membrane biogenesis; LPS lipid A biosynthesis. In terms of biological role, catalyzes the last two sequential reactions in the de novo biosynthetic pathway for UDP-N-acetylglucosamine (UDP-GlcNAc). The C-terminal domain catalyzes the transfer of acetyl group from acetyl coenzyme A to glucosamine-1-phosphate (GlcN-1-P) to produce N-acetylglucosamine-1-phosphate (GlcNAc-1-P), which is converted into UDP-GlcNAc by the transfer of uridine 5-monophosphate (from uridine 5-triphosphate), a reaction catalyzed by the N-terminal domain. In Streptococcus pneumoniae (strain Hungary19A-6), this protein is Bifunctional protein GlmU.